Consider the following 358-residue polypeptide: Protein Wnt-8b (358 aa).

The N-terminal stretch at 1–23 (MFMHLEVYYYAFILMAHMKTCCG) is a signal peptide. The cysteines at positions 55 and 66 are disulfide-linked. N-linked (GlcNAc...) asparagine glycosylation is present at asparagine 104. Disulfide bonds link cysteine 105/cysteine 113, cysteine 115/cysteine 133, cysteine 181/cysteine 195, cysteine 183/cysteine 190, cysteine 257/cysteine 295, cysteine 273/cysteine 288, cysteine 292/cysteine 334, cysteine 310/cysteine 325, cysteine 312/cysteine 322, and cysteine 317/cysteine 318. The O-palmitoleoyl serine moiety is linked to residue serine 187. Asparagine 260 and asparagine 279 each carry an N-linked (GlcNAc...) asparagine glycan. N-linked (GlcNAc...) asparagine glycosylation occurs at asparagine 345.

Belongs to the Wnt family. In terms of processing, palmitoleoylation is required for efficient binding to frizzled receptors. Depalmitoleoylation leads to Wnt signaling pathway inhibition. Proteolytic processing by tiki1 and tiki2 promotes oxidation and formation of large disulfide-bond oligomers, leading to inactivation of wnt8b. As to expression, hindbrain r1, 2 and 5.

The protein localises to the secreted. The protein resides in the extracellular space. It localises to the extracellular matrix. Functionally, ligand for fzd8a, a member of the G-protein coupled frizzled receptor family. May play a role in the establishment of polarity in the nervous system. Involved in canonical Wnt signaling pathway. During embryonic development, required for the acquisition of caudal diencephalic fate. Antagonizes eye specification. The protein is Protein Wnt-8b (wnt8b) of Danio rerio (Zebrafish).